The primary structure comprises 624 residues: DNA mismatch repair protein MutL (624 aa).

A compositionally biased stretch (basic and acidic residues) spans 340 to 355 (NKLDTDSHSQSHERGH). Residues 340-415 (NKLDTDSHSQ…RGGATSSYRQ (76 aa)) are disordered. 2 stretches are compositionally biased toward polar residues: residues 372-383 (HQTAPSTKASTE) and 391-415 (SPIS…SYRQ).

This sequence belongs to the DNA mismatch repair MutL/HexB family.

Functionally, this protein is involved in the repair of mismatches in DNA. It is required for dam-dependent methyl-directed DNA mismatch repair. May act as a 'molecular matchmaker', a protein that promotes the formation of a stable complex between two or more DNA-binding proteins in an ATP-dependent manner without itself being part of a final effector complex. The polypeptide is DNA mismatch repair protein MutL (Shewanella sediminis (strain HAW-EB3)).